Reading from the N-terminus, the 214-residue chain is Cell division protein SepF (214 aa).

The segment at 24–120 (DNYEEYEERK…NTRRAQESTA (97 aa)) is disordered. The span at 30-40 (EERKAVNEPPR) shows a compositional bias: basic and acidic residues. The span at 55 to 67 (ESYSQPAYTQQSE) shows a compositional bias: polar residues. The span at 69–98 (VVEKPSARYRSAEAHQERDTQQAAYTEKKV) shows a compositional bias: basic and acidic residues. Over residues 101–120 (MRSSNQSATTNTRRAQESTA) the composition is skewed to polar residues.

This sequence belongs to the SepF family. Homodimer. Interacts with FtsZ.

The protein localises to the cytoplasm. Functionally, cell division protein that is part of the divisome complex and is recruited early to the Z-ring. Probably stimulates Z-ring formation, perhaps through the cross-linking of FtsZ protofilaments. Its function overlaps with FtsA. The sequence is that of Cell division protein SepF from Enterococcus faecalis (strain ATCC 700802 / V583).